Here is a 589-residue protein sequence, read N- to C-terminus: Pentalenolactone D synthase (589 aa).

FAD-binding positions include 60 to 61, 82 to 83, 90 to 91, 102 to 103, tyrosine 108, valine 152, and methionine 491; these read IG, DE, TW, and DV.

Belongs to the FAD-binding monooxygenase family. The cofactor is FAD.

It carries out the reaction 1-deoxy-11-oxopentalenate + NADPH + O2 + H(+) = pentalenolactone D + NADP(+) + H2O. The protein operates within antibiotic biosynthesis; pentalenolactone biosynthesis. Catalyzes the flavin-dependent Baeyer-Villiger oxidation of 1-deoxy-11-oxopentalenic acid to pentalenolactone D in the biosynthesis of pentalenolactone antibiotic. This is Pentalenolactone D synthase (pntE) from Streptomyces arenae.